We begin with the raw amino-acid sequence, 410 residues long: Ribosomal RNA large subunit methyltransferase G (410 aa).

Belongs to the methyltransferase superfamily. RlmG family.

It is found in the cytoplasm. It carries out the reaction guanosine(1835) in 23S rRNA + S-adenosyl-L-methionine = N(2)-methylguanosine(1835) in 23S rRNA + S-adenosyl-L-homocysteine + H(+). Functionally, specifically methylates the guanine in position 1835 (m2G1835) of 23S rRNA. The chain is Ribosomal RNA large subunit methyltransferase G from Alteromonas mediterranea (strain DSM 17117 / CIP 110805 / LMG 28347 / Deep ecotype).